A 217-amino-acid polypeptide reads, in one-letter code: Protein-L-isoaspartate O-methyltransferase (217 aa).

Residue S64 is part of the active site.

The protein belongs to the methyltransferase superfamily. L-isoaspartyl/D-aspartyl protein methyltransferase family.

Its subcellular location is the cytoplasm. It catalyses the reaction [protein]-L-isoaspartate + S-adenosyl-L-methionine = [protein]-L-isoaspartate alpha-methyl ester + S-adenosyl-L-homocysteine. Catalyzes the methyl esterification of L-isoaspartyl residues in peptides and proteins that result from spontaneous decomposition of normal L-aspartyl and L-asparaginyl residues. It plays a role in the repair and/or degradation of damaged proteins. The protein is Protein-L-isoaspartate O-methyltransferase of Rhodopseudomonas palustris (strain BisB5).